A 65-amino-acid chain; its full sequence is Large ribosomal subunit protein bL35 (65 aa).

Residues 1 to 30 (MPKMKTVSGAAKRFKKTGSGRFKSKQSHLR) are disordered. The span at 12–30 (KRFKKTGSGRFKSKQSHLR) shows a compositional bias: basic residues.

It belongs to the bacterial ribosomal protein bL35 family.

In Alteromonas mediterranea (strain DSM 17117 / CIP 110805 / LMG 28347 / Deep ecotype), this protein is Large ribosomal subunit protein bL35.